Reading from the N-terminus, the 459-residue chain is ATP-dependent protease ATPase subunit HslU (459 aa).

Residues valine 26, 68–73 (GVGKTE), aspartate 271, glutamate 337, and arginine 409 each bind ATP.

It belongs to the ClpX chaperone family. HslU subfamily. In terms of assembly, a double ring-shaped homohexamer of HslV is capped on each side by a ring-shaped HslU homohexamer. The assembly of the HslU/HslV complex is dependent on binding of ATP.

It is found in the cytoplasm. In terms of biological role, ATPase subunit of a proteasome-like degradation complex; this subunit has chaperone activity. The binding of ATP and its subsequent hydrolysis by HslU are essential for unfolding of protein substrates subsequently hydrolyzed by HslV. HslU recognizes the N-terminal part of its protein substrates and unfolds these before they are guided to HslV for hydrolysis. The protein is ATP-dependent protease ATPase subunit HslU of Xylella fastidiosa (strain 9a5c).